The sequence spans 146 residues: NADH-quinone oxidoreductase subunit A (146 aa).

Transmembrane regions (helical) follow at residues 14 to 34, 68 to 88, and 96 to 116; these read FGLFLIIAVGLCVFMLTGGFL, LVAMFFVIFDVEALYLYAWAV, and IGFIEATIFILVLLAGLIYLV.

This sequence belongs to the complex I subunit 3 family. As to quaternary structure, NDH-1 is composed of 13 different subunits. Subunits NuoA, H, J, K, L, M, N constitute the membrane sector of the complex.

The protein localises to the cell inner membrane. It carries out the reaction a quinone + NADH + 5 H(+)(in) = a quinol + NAD(+) + 4 H(+)(out). Functionally, NDH-1 shuttles electrons from NADH, via FMN and iron-sulfur (Fe-S) centers, to quinones in the respiratory chain. The immediate electron acceptor for the enzyme in this species is believed to be ubiquinone. Couples the redox reaction to proton translocation (for every two electrons transferred, four hydrogen ions are translocated across the cytoplasmic membrane), and thus conserves the redox energy in a proton gradient. This Pectobacterium carotovorum subsp. carotovorum (Erwinia carotovora subsp. carotovora) protein is NADH-quinone oxidoreductase subunit A.